The chain runs to 161 residues: Cyclic pyranopterin monophosphate synthase (161 aa).

Substrate is bound by residues 75 to 77 (LCH) and 113 to 114 (ME). D128 is an active-site residue.

This sequence belongs to the MoaC family. Homohexamer; trimer of dimers.

The catalysed reaction is (8S)-3',8-cyclo-7,8-dihydroguanosine 5'-triphosphate = cyclic pyranopterin phosphate + diphosphate. It functions in the pathway cofactor biosynthesis; molybdopterin biosynthesis. Functionally, catalyzes the conversion of (8S)-3',8-cyclo-7,8-dihydroguanosine 5'-triphosphate to cyclic pyranopterin monophosphate (cPMP). The chain is Cyclic pyranopterin monophosphate synthase from Salmonella heidelberg (strain SL476).